The chain runs to 323 residues: E3 ubiquitin-protein ligase SIRP1 (323 aa).

An RING-type; atypical zinc finger spans residues 199-240; that stretch reads CSVCLDDLEVGSQAKQMPCEHKFHSSCILPWLELHSSCPVCR. Disordered stretches follow at residues 248–280 and 296–323; these read TKDL…ESSN and REAQ…AGHS. The span at 259–269 shows a compositional bias: basic and acidic residues; sequence RVEDSHEEVRA.

It is found in the cytoplasm. The enzyme catalyses S-ubiquitinyl-[E2 ubiquitin-conjugating enzyme]-L-cysteine + [acceptor protein]-L-lysine = [E2 ubiquitin-conjugating enzyme]-L-cysteine + N(6)-ubiquitinyl-[acceptor protein]-L-lysine.. It functions in the pathway protein modification; protein ubiquitination. In terms of biological role, possesses E3 ubiqutin-protein ligase activity in vitro. Acts as negative regulator of salinity stress tolerance mediated by the ubiquitin-proteasome degradation pathway. This chain is E3 ubiquitin-protein ligase SIRP1, found in Oryza sativa subsp. japonica (Rice).